We begin with the raw amino-acid sequence, 297 residues long: N-acetylmuramic acid 6-phosphate etherase (297 aa).

The region spanning 56 to 219 is the SIS domain; it reads AIEAFNKGGR…STISMIGIGK (164 aa). Catalysis depends on Glu-84, which acts as the Proton donor. Glu-115 is an active-site residue.

This sequence belongs to the GCKR-like family. MurNAc-6-P etherase subfamily. Homodimer.

It carries out the reaction N-acetyl-D-muramate 6-phosphate + H2O = N-acetyl-D-glucosamine 6-phosphate + (R)-lactate. Its pathway is amino-sugar metabolism; N-acetylmuramate degradation. Functionally, specifically catalyzes the cleavage of the D-lactyl ether substituent of MurNAc 6-phosphate, producing GlcNAc 6-phosphate and D-lactate. The chain is N-acetylmuramic acid 6-phosphate etherase from Lactococcus lactis subsp. cremoris (strain MG1363).